The sequence spans 174 residues: Probable N-acetyltransferase Rv2775 (174 aa).

Residues Ile-6 to Pro-172 form the N-acetyltransferase domain.

Belongs to the acetyltransferase family.

This chain is Probable N-acetyltransferase Rv2775, found in Mycobacterium tuberculosis (strain ATCC 25618 / H37Rv).